A 181-amino-acid chain; its full sequence is Acireductone dioxygenase (181 aa).

4 residues coordinate Fe(2+): His98, His100, Glu104, and His142. Ni(2+) contacts are provided by His98, His100, Glu104, and His142.

The protein belongs to the acireductone dioxygenase (ARD) family. As to quaternary structure, monomer. Fe(2+) is required as a cofactor. It depends on Ni(2+) as a cofactor.

The enzyme catalyses 1,2-dihydroxy-5-(methylsulfanyl)pent-1-en-3-one + O2 = 3-(methylsulfanyl)propanoate + CO + formate + 2 H(+). The catalysed reaction is 1,2-dihydroxy-5-(methylsulfanyl)pent-1-en-3-one + O2 = 4-methylsulfanyl-2-oxobutanoate + formate + 2 H(+). The protein operates within amino-acid biosynthesis; L-methionine biosynthesis via salvage pathway; L-methionine from S-methyl-5-thio-alpha-D-ribose 1-phosphate: step 5/6. Its function is as follows. Catalyzes 2 different reactions between oxygen and the acireductone 1,2-dihydroxy-3-keto-5-methylthiopentene (DHK-MTPene) depending upon the metal bound in the active site. Fe-containing acireductone dioxygenase (Fe-ARD) produces formate and 2-keto-4-methylthiobutyrate (KMTB), the alpha-ketoacid precursor of methionine in the methionine recycle pathway. Ni-containing acireductone dioxygenase (Ni-ARD) produces methylthiopropionate, carbon monoxide and formate, and does not lie on the methionine recycle pathway. This is Acireductone dioxygenase from Alcanivorax borkumensis (strain ATCC 700651 / DSM 11573 / NCIMB 13689 / SK2).